Consider the following 400-residue polypeptide: MGFWAKLKEKLTKKTNQVEQDEPILDQQDQQDQQEEQEQIIEKEIEQIKENKIKKTKTSETKKQEKPIETLKEKKKREKQKEKDKKVEKAMLKSAFNFSKDIKKLSKKYKQADDEFFEELEDVLIQTDMGMKMVLKVSNLVRKKTKRDTSFENIKDALVESLYQAYTDNDWTNKKYRIDFKENRLNIFMLVGVNGTGKTTSLAKMANYYAELGYKVLIAAADTFRAGATQQLEEWIKTRLNNKVDLVKANKLNADPASVVFDAIKKAKEQNYDLLLIDTAGRLQNKVNLMAELEKMNKIIQQVEKSAPHEVLLVIDATTGQNGVIQAEEFSKVADVSGIILTKMDSTSKGGIGLAIKELLNIPIKMIGVGEKVDDLLAFDIDQYIVHLSSGFMQGDEVEK.

Disordered regions lie at residues 12-37 and 51-86; these read TKKT…QEEQ and NKIK…KDKK. Residues 51–72 are compositionally biased toward basic and acidic residues; the sequence is NKIKKTKTSETKKQEKPIETLK. GTP-binding positions include 192–199, 278–282, and 342–345; these read GVNGTGKT, DTAGR, and TKMD.

The protein belongs to the GTP-binding SRP family. FtsY subfamily. As to quaternary structure, part of the signal recognition particle protein translocation system, which is composed of SRP and FtsY.

It localises to the cell membrane. Its subcellular location is the cytoplasm. The catalysed reaction is GTP + H2O = GDP + phosphate + H(+). Involved in targeting and insertion of nascent membrane proteins into the cytoplasmic membrane. Acts as a receptor for the complex formed by the signal recognition particle (SRP) and the ribosome-nascent chain (RNC). This is Signal recognition particle receptor FtsY from Mycoplasma mycoides subsp. mycoides SC (strain CCUG 32753 / NCTC 10114 / PG1).